The chain runs to 394 residues: Putative bacilysin exporter BacE (394 aa).

A run of 11 helical transmembrane segments spans residues 11-31 (LLYG…ALLI), 43-63 (SGVI…GVLV), 69-89 (IKIM…LTFL), 92-112 (GEYP…GVFF), 142-162 (IIVG…ELAV), 166-186 (GVTY…FVPI), 215-235 (MFTM…FPIV), 244-264 (IGNF…AALV), 288-308 (LFLF…FFIA), 332-352 (IFSV…MFIN), and 353-373 (ILSA…LFLH).

This sequence belongs to the major facilitator superfamily. Drug:H(+) antiporter-3 (DHA3) (TC 2.A.1.21) family.

It localises to the cell membrane. Functionally, part of the bacilysin biosynthesis operon. May be involved in self-resistance to bacilysin by permitting efflux of this antibiotic. The polypeptide is Putative bacilysin exporter BacE (bacE) (Bacillus subtilis (strain 168)).